We begin with the raw amino-acid sequence, 79 residues long: MSEISVTQTLDTLGLRCPEPVMLVRKNIRHLNDGEILLIIADDPATTRDIPSFCQFMDHTLLQSEVEKPPFKYWVKRGK.

Catalysis depends on Cys-17, which acts as the Cysteine persulfide intermediate.

Belongs to the sulfur carrier protein TusA family.

The protein localises to the cytoplasm. In terms of biological role, sulfur carrier protein which probably makes part of a sulfur-relay system. The protein is Sulfur carrier protein TusA of Haemophilus influenzae (strain PittEE).